The following is a 1042-amino-acid chain: Elongation factor 3 (1042 aa).

6 HEAT repeats span residues 9 to 46 (KVLM…DPDT), 86 to 124 (PYLV…TMNP), 167 to 204 (YRLP…LISN), 206 to 242 (DIDK…EVHA), 243 to 280 (STLS…LVED), and 289 to 327 (PKLI…VKEG). ABC transporter domains follow at residues 425-642 (EEGE…YQDI) and 668-994 (CRMR…EQEE). Residues Asn-704, Glu-923, Asn-926, and His-952 each coordinate ADP. The tract at residues 1009 to 1042 (KKAKKLTSSELRKKKKERMARRKKGEEVFSDEDD) is disordered. Positions 1020–1031 (RKKKKERMARRK) are enriched in basic residues.

Belongs to the ABC transporter superfamily. ABCF family. EF3 subfamily. As to quaternary structure, monomer.

The protein localises to the cytoplasm. The catalysed reaction is ATP + H2O = ADP + phosphate + H(+). Its pathway is protein biosynthesis; polypeptide chain elongation. In terms of biological role, ribosome-dependent ATPase that functions in cytoplasmic translation elongation. Required for the ATP-dependent release of deacylated tRNA from the ribosomal E-site during protein biosynthesis. Stimulates the eEF1A-dependent binding of aminoacyl-tRNA to the ribosomal A-site, which has reduced affinity for tRNA as long as the E-site is occupied. Assists translation termination by stimulating the release of nascent protein from the ribosome by release factors. This Pneumocystis carinii protein is Elongation factor 3 (TEF3).